Consider the following 55-residue polypeptide: Trypsin inhibitor (55 aa).

In terms of domain architecture, Kazal-like spans 1 to 55 (AHMDCTEFNPLCRCNKMLGDLICAVIGDAKEEHRNMCALCCEHPGGFEYSNGPCE). Cystine bridges form between Cys-5-Cys-40, Cys-12-Cys-41, Cys-14-Cys-37, and Cys-23-Cys-54.

The protein resides in the secreted. Potent inhibitor of trypsin. The polypeptide is Trypsin inhibitor (Halocynthia roretzi (Sea squirt)).